The chain runs to 240 residues: MMPLLDKLREQYGVGPLCSELHIAPSTYYHCQQQRHHPDKRSARAQRDDWLKKQIQRVYDENHKVYGVRKVWRQLLREGIRVARCTVARLMAVMGLAGVLRGKKVRTTISRKAVAAGHRVNRQFVAERPDQLWVADFTYVSTWRGFVYVAFIIDVFAGYIVGWRVSSSMETTFVLDALEQALWTRRPPARSITVIKVLSMYRWPTHSGLRKPDYWHQQEVQATRMTTRWRRASMVFTKRR.

One can recognise an Integrase catalytic domain in the interval 125–240 (VAERPDQLWV…RASMVFTKRR (116 aa)).

In terms of biological role, involved in the transposition of the insertion sequence. The polypeptide is Transposase for insertion sequence element IS3411 (Escherichia coli).